The following is a 171-amino-acid chain: Ribosome maturation factor RimM (171 aa).

A PRC barrel domain is found at 93–167 (DGVYYYKDIF…KVYVELMEGL (75 aa)).

The protein belongs to the RimM family. Binds ribosomal protein uS19.

It is found in the cytoplasm. Its function is as follows. An accessory protein needed during the final step in the assembly of 30S ribosomal subunit, possibly for assembly of the head region. Essential for efficient processing of 16S rRNA. May be needed both before and after RbfA during the maturation of 16S rRNA. It has affinity for free ribosomal 30S subunits but not for 70S ribosomes. In Lactobacillus helveticus (strain DPC 4571), this protein is Ribosome maturation factor RimM.